The sequence spans 297 residues: tRNA-cytidine(32) 2-sulfurtransferase (297 aa).

The PP-loop motif signature appears at 45–50; the sequence is SGGKDS. C120, C123, and C211 together coordinate [4Fe-4S] cluster.

Belongs to the TtcA family. In terms of assembly, homodimer. Mg(2+) is required as a cofactor. It depends on [4Fe-4S] cluster as a cofactor.

The protein localises to the cytoplasm. It catalyses the reaction cytidine(32) in tRNA + S-sulfanyl-L-cysteinyl-[cysteine desulfurase] + AH2 + ATP = 2-thiocytidine(32) in tRNA + L-cysteinyl-[cysteine desulfurase] + A + AMP + diphosphate + H(+). It participates in tRNA modification. Its function is as follows. Catalyzes the ATP-dependent 2-thiolation of cytidine in position 32 of tRNA, to form 2-thiocytidine (s(2)C32). The sulfur atoms are provided by the cysteine/cysteine desulfurase (IscS) system. The protein is tRNA-cytidine(32) 2-sulfurtransferase of Vibrio parahaemolyticus serotype O3:K6 (strain RIMD 2210633).